Here is a 250-residue protein sequence, read N- to C-terminus: Isoprenyl transferase (250 aa).

Residue D27 is part of the active site. D27 lines the Mg(2+) pocket. Residues 28-31 (GNRR), W32, H48, and 76-78 (STE) each bind substrate. N79 acts as the Proton acceptor in catalysis. Residues F80, R82, R199, and 205–207 (RVS) contribute to the substrate site. E218 serves as a coordination point for Mg(2+).

This sequence belongs to the UPP synthase family. Homodimer. The cofactor is Mg(2+).

Its function is as follows. Catalyzes the condensation of isopentenyl diphosphate (IPP) with allylic pyrophosphates generating different type of terpenoids. This chain is Isoprenyl transferase, found in Chlamydia pneumoniae (Chlamydophila pneumoniae).